Consider the following 769-residue polypeptide: Amino-acid acetyltransferase, mitochondrial (769 aa).

The tract at residues 150–172 (LKASPAKSGQEPTESPKESISAS) is disordered. Residues 159-172 (QEPTESPKESISAS) show a composition bias toward polar residues. In terms of domain architecture, N-acetyltransferase spans 590–759 (MQPRLGLNDP…YEAVCRSIQP (170 aa)).

Belongs to the acetyltransferase family.

Its subcellular location is the mitochondrion. It catalyses the reaction L-glutamate + acetyl-CoA = N-acetyl-L-glutamate + CoA + H(+). Its pathway is amino-acid biosynthesis; L-arginine biosynthesis; N(2)-acetyl-L-ornithine from L-glutamate: step 1/4. In terms of biological role, N-acetylglutamate synthase involved in arginine biosynthesis. This is Amino-acid acetyltransferase, mitochondrial (arg2) from Penicillium rubens (strain ATCC 28089 / DSM 1075 / NRRL 1951 / Wisconsin 54-1255) (Penicillium chrysogenum).